A 234-amino-acid polypeptide reads, in one-letter code: HTH-type transcriptional repressor FabR (234 aa).

The 61-residue stretch at 29-89 (KTRRSLVEAA…TMVDESGLML (61 aa)) folds into the HTH tetR-type domain. Positions 52-71 (SLREVAREAGIAPTSFYRHF) form a DNA-binding region, H-T-H motif.

As to quaternary structure, homodimer.

The protein resides in the cytoplasm. Has been suggested to require either an unsaturated acyl carrier protein or unsaturated acyl-CoA (but not their saturated equivalents) for DNA-binding. Another group suggests that unsaturated thioesters are not essential but act instead to enhance DNA-binding. Binds the promoter region of at least fabA and fabB, but probably not yqfA. Represses the transcription of fabA and fabB, involved in unsaturated fatty acid (UFA) biosynthesis. By controlling UFA production, FabR directly influences the physical properties of the membrane bilayer. This chain is HTH-type transcriptional repressor FabR, found in Escherichia coli (strain K12).